Reading from the N-terminus, the 284-residue chain is D-tagatose-1,6-bisphosphate aldolase subunit GatY (284 aa).

Aspartate 82 (proton donor) is an active-site residue. Zn(2+) contacts are provided by histidine 83 and histidine 180. A dihydroxyacetone phosphate-binding site is contributed by glycine 181. Zn(2+) is bound at residue histidine 208. Dihydroxyacetone phosphate contacts are provided by residues 209–211 (GAS) and 230–233 (NVAT).

The protein belongs to the class II fructose-bisphosphate aldolase family. TagBP aldolase GatY subfamily. As to quaternary structure, forms a complex with GatZ. Zn(2+) serves as cofactor.

It catalyses the reaction D-tagatofuranose 1,6-bisphosphate = D-glyceraldehyde 3-phosphate + dihydroxyacetone phosphate. The protein operates within carbohydrate metabolism; D-tagatose 6-phosphate degradation; D-glyceraldehyde 3-phosphate and glycerone phosphate from D-tagatose 6-phosphate: step 2/2. In terms of biological role, catalytic subunit of the tagatose-1,6-bisphosphate aldolase GatYZ, which catalyzes the reversible aldol condensation of dihydroxyacetone phosphate (DHAP or glycerone-phosphate) with glyceraldehyde 3-phosphate (G3P) to produce tagatose 1,6-bisphosphate (TBP). Requires GatZ subunit for full activity and stability. Is involved in the catabolism of galactitol. This is D-tagatose-1,6-bisphosphate aldolase subunit GatY from Shigella dysenteriae serotype 1 (strain Sd197).